The chain runs to 86 residues: RNA-binding protein Hfq (86 aa).

The Sm domain maps to 9–68; it reads DPYLNTLRKEKVGVSIYLVNGIKLQGTIESFDQFVILLKNTVSQMVYKHAISTVVPVRPI.

This sequence belongs to the Hfq family. In terms of assembly, homohexamer.

RNA chaperone that binds small regulatory RNA (sRNAs) and mRNAs to facilitate mRNA translational regulation in response to envelope stress, environmental stress and changes in metabolite concentrations. Also binds with high specificity to tRNAs. This Pseudomonas savastanoi pv. phaseolicola (strain 1448A / Race 6) (Pseudomonas syringae pv. phaseolicola (strain 1448A / Race 6)) protein is RNA-binding protein Hfq.